Consider the following 283-residue polypeptide: Acetylglutamate kinase (283 aa).

Substrate contacts are provided by residues 63–64 (GG), Arg-85, and Asn-178.

It belongs to the acetylglutamate kinase family. ArgB subfamily.

It is found in the plastid. Its subcellular location is the chloroplast. It catalyses the reaction N-acetyl-L-glutamate + ATP = N-acetyl-L-glutamyl 5-phosphate + ADP. The protein operates within amino-acid biosynthesis; L-arginine biosynthesis; N(2)-acetyl-L-ornithine from L-glutamate: step 2/4. Its function is as follows. Catalyzes the ATP-dependent phosphorylation of N-acetyl-L-glutamate. This Porphyra purpurea (Red seaweed) protein is Acetylglutamate kinase.